We begin with the raw amino-acid sequence, 243 residues long: 3-deoxy-manno-octulosonate cytidylyltransferase (243 aa).

Belongs to the KdsB family.

It localises to the cytoplasm. It catalyses the reaction 3-deoxy-alpha-D-manno-oct-2-ulosonate + CTP = CMP-3-deoxy-beta-D-manno-octulosonate + diphosphate. The protein operates within nucleotide-sugar biosynthesis; CMP-3-deoxy-D-manno-octulosonate biosynthesis; CMP-3-deoxy-D-manno-octulosonate from 3-deoxy-D-manno-octulosonate and CTP: step 1/1. It participates in bacterial outer membrane biogenesis; lipopolysaccharide biosynthesis. Its function is as follows. Activates KDO (a required 8-carbon sugar) for incorporation into bacterial lipopolysaccharide in Gram-negative bacteria. This chain is 3-deoxy-manno-octulosonate cytidylyltransferase, found in Helicobacter pylori (strain ATCC 700392 / 26695) (Campylobacter pylori).